The following is a 244-amino-acid chain: Transcription factor A, mitochondrial (244 aa).

A mitochondrion-targeting transit peptide spans 1–42; it reads MALFRGMWGVLRTLGRTGVEMCAGCGGRIPSPVSLICIPKCF. A DNA-binding region (HMG box 1) is located at residues 49–117; that stretch reads PKKPMSSYLR…VYKEAVSKYK (69 aa). Residues Ser54, Ser55, and Ser60 each carry the phosphoserine; by PKA modification. The residue at position 66 (Lys66) is an N6-succinyllysine. Phosphothreonine is present on Thr121. Residues 154 to 218 constitute a DNA-binding region (HMG box 2); that stretch reads PKRPRSAYNI…RYDNEMKSWE (65 aa). Ser159 carries the phosphoserine; by PKA modification. Residue Ser192 is modified to Phosphoserine. Residues 221 to 244 form a disordered region; it reads MAEVGRSDLIRRSVKRPPGDISEN.

In terms of assembly, monomer; binds DNA as a monomer. Homodimer. Component of the mitochondrial transcription initiation complex, composed at least of TFB2M, TFAM and POLRMT. In this complex TFAM recruits POLRMT to the promoter whereas TFB2M induces structural changes in POLRMT to enable promoter opening and trapping of the DNA non-template strand. Upon metabolic stress, forms a complex composed of FOXO3, SIRT3, TFAM and POLRMT. Interacts with TFB1M and TFB2M. Interacts with CLPX; this enhances DNA-binding. Post-translationally, phosphorylation by PKA within the HMG box 1 impairs DNA binding and promotes degradation by the AAA+ Lon protease. As to expression, the mitochondrial isoform is widely expressed while the nuclear isoform is testis-specific.

Its subcellular location is the mitochondrion. The protein localises to the mitochondrion matrix. It is found in the mitochondrion nucleoid. The protein resides in the nucleus. Its function is as follows. Binds to the mitochondrial light strand promoter and functions in mitochondrial transcription regulation. Component of the mitochondrial transcription initiation complex, composed at least of TFB2M, TFAM and POLRMT that is required for basal transcription of mitochondrial DNA. In this complex, TFAM recruits POLRMT to a specific promoter whereas TFB2M induces structural changes in POLRMT to enable promoter opening and trapping of the DNA non-template strand. Required for accurate and efficient promoter recognition by the mitochondrial RNA polymerase. Promotes transcription initiation from the HSP1 and the light strand promoter by binding immediately upstream of transcriptional start sites. Is able to unwind DNA. Bends the mitochondrial light strand promoter DNA into a U-turn shape via its HMG boxes. Required for maintenance of normal levels of mitochondrial DNA. May play a role in organizing and compacting mitochondrial DNA. May also function as a transcriptional activator or may have a structural role in the compaction of nuclear DNA during spermatogenesis. This is Transcription factor A, mitochondrial from Rattus norvegicus (Rat).